The following is a 948-amino-acid chain: Coiled-coil domain-containing protein 66 (948 aa).

Phosphothreonine is present on residues Thr115 and Thr121. A Phosphoserine modification is found at Ser369. Positions 458–499 (DRRRQKQLEHQKAITAQVEEKRRKKQLEEEQRKKEEQEEELR) are disordered. A coiled-coil region spans residues 467-558 (HQKAITAQVE…EQRIRELAQK (92 aa)). The mediates localization to cilia, centrosomes and spindle microtubules and the interaction with PCM1, CEP290, CEP104 and CSPP1 stretch occupies residues 570-948 (GVDTIQMEYN…NQEESFGSSF (379 aa)). Residue Ser606 is modified to Phosphoserine. Disordered stretches follow at residues 690–713 (QTKH…KRYI) and 788–808 (SFSK…RTQQ).

In terms of assembly, homodimer; disulfide-linked. Interacts with CEP290. Interacts with PCM1. Interacts with ARMC9, TOGARAM1, CSPP1 and CEP104. Interacts with CDK5RAP2, CEP152, CEP192, TBG1 and PRC1. As to expression, widely expressed (at protein level). Expressed in retina, mainly in photoreceptors but also in outer plexiform and ganglion cell layers (at protein level).

It is found in the cytoplasm. Its subcellular location is the cytoskeleton. The protein localises to the microtubule organizing center. The protein resides in the centrosome. It localises to the centriolar satellite. It is found in the cell projection. Its subcellular location is the cilium. The protein localises to the cilium basal body. The protein resides in the cilium axoneme. It localises to the photoreceptor inner segment. It is found in the photoreceptor outer segment. Its subcellular location is the spindle. The protein localises to the midbody. Its function is as follows. Microtubule-binding protein required for ciliogenesis. May function in ciliogenesis by mediating the transport of proteins like BBS4 to the cilium, but also through the organization of the centriolar satellites. Required for the assembly of signaling-competent cilia with proper structure and length. Mediates this function in part by regulating transition zone assembly and basal body recruitment of the IFT-B complex. Cooperates with the ciliopathy proteins CSPP1 and CEP104 during cilium length regulation. Plays two important roles during cell division. First, is required for mitotic progression via regulation of spindle assembly, organization and orientation, levels of spindle microtubules (MTs), kinetochore-fiber integrity, and chromosome alignment. Second, functions during cytokinesis in part by regulating assembly and organization of central spindle and midbody MTs. Plays a role in retina morphogenesis and/or homeostasis. The sequence is that of Coiled-coil domain-containing protein 66 from Homo sapiens (Human).